A 481-amino-acid polypeptide reads, in one-letter code: Leukocyte immunoglobulin-like receptor subfamily A member 6 (481 aa).

The N-terminal stretch at 1-23 (MTPALTALLCLGLSLGPRTHVQA) is a signal peptide. The Ig-like C2-type 1 domain occupies 24-118 (GPLPKPTLWA…PSDPLELVVT (95 aa)). At 24 to 447 (GPLPKPTLWA…SHAKDYTVEN (424 aa)) the chain is on the extracellular side. The cysteines at positions 49 and 98 are disulfide-linked. N-linked (GlcNAc...) asparagine glycosylation occurs at N139. Disulfide bonds link C144/C196 and C245/C296. 2 Ig-like C2-type domains span residues 225–314 (PSLL…DPLN) and 323–408 (DRVS…HLLS). N301 and N340 each carry an N-linked (GlcNAc...) asparagine glycan. A disulfide bridge links C345 with C396. A disordered region spans residues 418–439 (VSGPSGGPSLPPTGPPSTPASH). Positions 426-435 (SLPPTGPPST) are enriched in pro residues. The helical transmembrane segment at 448-468 (LIRMGMAGLVLVVLGILLFEA) threads the bilayer. Topologically, residues 469 to 481 (QHSQRSPQDAARR) are cytoplasmic.

It localises to the membrane. May act as receptor for class I MHC antigens. The protein is Leukocyte immunoglobulin-like receptor subfamily A member 6 (LILRA6) of Pan troglodytes (Chimpanzee).